We begin with the raw amino-acid sequence, 533 residues long: Probable nucleolar protein 5-2 (533 aa).

Positions 281 to 399 (IAPNLTALVG…LEARLRNLEG (119 aa)) constitute a Nop domain. 2 disordered regions span residues 401-433 (DLGR…ITPA) and 445-533 (GETS…KSKD). Basic and acidic residues predominate over residues 413–424 (PKIEVYNKDKKM). Over residues 521 to 533 (KKDKKEKKKKSKD) the composition is skewed to basic residues.

Belongs to the NOP5/NOP56 family.

It localises to the nucleus. Its subcellular location is the nucleolus. In terms of biological role, required for 60S ribosomal subunit biogenesis. The sequence is that of Probable nucleolar protein 5-2 (NOP5-2) from Arabidopsis thaliana (Mouse-ear cress).